Consider the following 160-residue polypeptide: Ribosome maturation factor RimP (160 aa).

It belongs to the RimP family.

The protein localises to the cytoplasm. Functionally, required for maturation of 30S ribosomal subunits. In Symbiobacterium thermophilum (strain DSM 24528 / JCM 14929 / IAM 14863 / T), this protein is Ribosome maturation factor RimP.